The following is a 197-amino-acid chain: uncharacterized protein (197 aa).

Positions 1-10 (MKNNYTSLKS) are enriched in polar residues. Disordered stretches follow at residues 1–46 (MKNN…PPYS) and 54–73 (LVPEDSSTGPTETANPNVER). Residues 18–37 (LKTGHEIDLEKGPLPEHNSE) show a composition bias toward basic and acidic residues. A compositionally biased stretch (polar residues) spans 58-69 (DSSTGPTETANP). 2 consecutive transmembrane segments (helical) span residues 83 to 105 (NIYSLLRLLIAVLAVSVVFFTAW) and 120 to 142 (AFFVLIGLTCLILLITMILEPGL).

It belongs to the WTF family.

It localises to the endoplasmic reticulum membrane. This is an uncharacterized protein from Schizosaccharomyces pombe (strain 972 / ATCC 24843) (Fission yeast).